We begin with the raw amino-acid sequence, 332 residues long: Elongin-A (332 aa).

Positions 24–68 (LEDIGHMPYALVRRVLLKMSAEQLLRLERASPALLLEDEEAWQQL) constitute an F-box domain. The tract at residues 228-332 (TPSAQPAASL…KPRVYIHTPR (105 aa)) is disordered. The segment covering 296–309 (LFSSPALSTLLPQQ) has biased composition (polar residues). Residues 320–332 (PPKKPRVYIHTPR) show a composition bias toward basic residues.

It belongs to the ELA1 family. In terms of assembly, heterodimer with ELC1. Component of a CRL3 E3 ubiquitin ligase complex consisting of a cullin, the linker protein ELC1, the substrate receptor ELA1, and a RING protein. Interacts with the large RNA polymerase II subunit RPO21 in a manner dependent on DEF1.

Functionally, as part of the CRL3 E3 ubiquitin ligase complex; polyubiquitylates monoubiquitylated RNA polymerase II subunit RPO21 to trigger its proteolysis; plays a role in global genomic repair. The protein is Elongin-A (ELA1) of Eremothecium gossypii (strain ATCC 10895 / CBS 109.51 / FGSC 9923 / NRRL Y-1056) (Yeast).